The primary structure comprises 453 residues: Bifunctional protein GlmU (453 aa).

The interval methionine 1–arginine 226 is pyrophosphorylase. UDP-N-acetyl-alpha-D-glucosamine is bound by residues leucine 8–glycine 11, lysine 22, glutamine 73, and glycine 78–threonine 79. Aspartate 102 provides a ligand contact to Mg(2+). The UDP-N-acetyl-alpha-D-glucosamine site is built by glycine 137, glutamate 151, asparagine 166, and asparagine 224. Position 224 (asparagine 224) interacts with Mg(2+). The segment at lysine 227–glutamine 247 is linker. The interval glycine 248–glutamate 453 is N-acetyltransferase. Residues arginine 330 and lysine 348 each coordinate UDP-N-acetyl-alpha-D-glucosamine. The active-site Proton acceptor is histidine 360. Residues tyrosine 363 and asparagine 374 each coordinate UDP-N-acetyl-alpha-D-glucosamine. Acetyl-CoA contacts are provided by residues alanine 377, asparagine 383–tyrosine 384, serine 402, alanine 420, and arginine 437.

This sequence in the N-terminal section; belongs to the N-acetylglucosamine-1-phosphate uridyltransferase family. In the C-terminal section; belongs to the transferase hexapeptide repeat family. In terms of assembly, homotrimer. Requires Mg(2+) as cofactor.

It is found in the cytoplasm. The enzyme catalyses alpha-D-glucosamine 1-phosphate + acetyl-CoA = N-acetyl-alpha-D-glucosamine 1-phosphate + CoA + H(+). The catalysed reaction is N-acetyl-alpha-D-glucosamine 1-phosphate + UTP + H(+) = UDP-N-acetyl-alpha-D-glucosamine + diphosphate. It functions in the pathway nucleotide-sugar biosynthesis; UDP-N-acetyl-alpha-D-glucosamine biosynthesis; N-acetyl-alpha-D-glucosamine 1-phosphate from alpha-D-glucosamine 6-phosphate (route II): step 2/2. Its pathway is nucleotide-sugar biosynthesis; UDP-N-acetyl-alpha-D-glucosamine biosynthesis; UDP-N-acetyl-alpha-D-glucosamine from N-acetyl-alpha-D-glucosamine 1-phosphate: step 1/1. It participates in bacterial outer membrane biogenesis; LPS lipid A biosynthesis. Its function is as follows. Catalyzes the last two sequential reactions in the de novo biosynthetic pathway for UDP-N-acetylglucosamine (UDP-GlcNAc). The C-terminal domain catalyzes the transfer of acetyl group from acetyl coenzyme A to glucosamine-1-phosphate (GlcN-1-P) to produce N-acetylglucosamine-1-phosphate (GlcNAc-1-P), which is converted into UDP-GlcNAc by the transfer of uridine 5-monophosphate (from uridine 5-triphosphate), a reaction catalyzed by the N-terminal domain. The polypeptide is Bifunctional protein GlmU (Pseudoalteromonas atlantica (strain T6c / ATCC BAA-1087)).